Reading from the N-terminus, the 1240-residue chain is DNA polymerase catalytic subunit (1240 aa).

Residues 1–26 show a composition bias toward low complexity; the sequence is MFCAAGGPASPGGKSAARAASGFFAP. Disordered stretches follow at residues 1-65, 646-695, and 1103-1139; these read MFCA…PAQR, GLDK…RETG, and AAAP…ASKP. Polar residues predominate over residues 44-56; sequence NFYNPHLAQTGTQ. A compositionally biased stretch (acidic residues) spans 669–688; it reads NGDEDKDDDEDGDEDGDERE.

This sequence belongs to the DNA polymerase type-B family. In terms of assembly, forms a complex with the ssDNA-binding protein UL29, the DNA polymerase processivity factor, and the alkaline exonuclease. Interacts with the putative helicase-primase complex subunit UL8; this interaction may coordinate leading and lagging strand DNA synthesis at the replication fork.

It is found in the host nucleus. The catalysed reaction is DNA(n) + a 2'-deoxyribonucleoside 5'-triphosphate = DNA(n+1) + diphosphate. It catalyses the reaction Endonucleolytic cleavage to 5'-phosphomonoester.. In terms of biological role, replicates viral genomic DNA. The replication complex is composed of six viral proteins: the DNA polymerase, processivity factor, primase, primase-associated factor, helicase, and ssDNA-binding protein. Additionally, the polymerase contains an intrinsic ribonuclease H (RNase H) activity that specifically degrades RNA/DNA heteroduplexes or duplex DNA substrates in the 5' to 3' direction. Therefore, it can catalyze the excision of the RNA primers that initiate the synthesis of Okazaki fragments at a replication fork during viral DNA replication. In Human herpesvirus 2 (strain 186) (HHV-2), this protein is DNA polymerase catalytic subunit.